Consider the following 733-residue polypeptide: Phosphoribosylformylglycinamidine synthase subunit PurL (733 aa).

His-44 is a catalytic residue. ATP contacts are provided by Tyr-47 and Lys-86. Residue Glu-88 participates in Mg(2+) binding. Substrate is bound by residues 89 to 92 and Arg-111; that span reads SHNH. Residue His-90 is the Proton acceptor of the active site. Asp-112 is a Mg(2+) binding site. Gln-240 lines the substrate pocket. Asp-268 lines the Mg(2+) pocket. Position 312-314 (312-314) interacts with substrate; that stretch reads ESQ. 2 residues coordinate ATP: Asp-496 and Gly-533. A Mg(2+)-binding site is contributed by Asn-534. Substrate is bound at residue Ser-536.

The protein belongs to the FGAMS family. As to quaternary structure, monomer. Part of the FGAM synthase complex composed of 1 PurL, 1 PurQ and 2 PurS subunits.

Its subcellular location is the cytoplasm. It carries out the reaction N(2)-formyl-N(1)-(5-phospho-beta-D-ribosyl)glycinamide + L-glutamine + ATP + H2O = 2-formamido-N(1)-(5-O-phospho-beta-D-ribosyl)acetamidine + L-glutamate + ADP + phosphate + H(+). It participates in purine metabolism; IMP biosynthesis via de novo pathway; 5-amino-1-(5-phospho-D-ribosyl)imidazole from N(2)-formyl-N(1)-(5-phospho-D-ribosyl)glycinamide: step 1/2. Its function is as follows. Part of the phosphoribosylformylglycinamidine synthase complex involved in the purines biosynthetic pathway. Catalyzes the ATP-dependent conversion of formylglycinamide ribonucleotide (FGAR) and glutamine to yield formylglycinamidine ribonucleotide (FGAM) and glutamate. The FGAM synthase complex is composed of three subunits. PurQ produces an ammonia molecule by converting glutamine to glutamate. PurL transfers the ammonia molecule to FGAR to form FGAM in an ATP-dependent manner. PurS interacts with PurQ and PurL and is thought to assist in the transfer of the ammonia molecule from PurQ to PurL. This is Phosphoribosylformylglycinamidine synthase subunit PurL from Wolinella succinogenes (strain ATCC 29543 / DSM 1740 / CCUG 13145 / JCM 31913 / LMG 7466 / NCTC 11488 / FDC 602W) (Vibrio succinogenes).